Here is a 315-residue protein sequence, read N- to C-terminus: Olfactory receptor 5M1 (315 aa).

At 1-25 (MFSPNHTIVTEFILLGLTDDPVLEK) the chain is on the extracellular side. Asparagine 5 carries an N-linked (GlcNAc...) asparagine glycan. The helical transmembrane segment at 26–46 (ILFGVFLAIYLITLAGNLCMI) threads the bilayer. Topologically, residues 47-54 (LLIRTNSH) are cytoplasmic. Residues 55–75 (LQTPMYFFLGHLSFVDICYSS) traverse the membrane as a helical segment. The Extracellular segment spans residues 76-99 (NVTPNMLHNFLSEQKTISYAGCFT). A disulfide bridge connects residues cysteine 97 and cysteine 189. A helical membrane pass occupies residues 100-120 (QCLLFIALVITEFYILASMAL). The Cytoplasmic portion of the chain corresponds to 121–139 (DRYVAICSPLHYSSRMSKN). A helical membrane pass occupies residues 140–160 (ICVCLVTIPYMYGFLSGFSQS). The Extracellular portion of the chain corresponds to 161–196 (LLTFHLSFCGSLEINHFYCADPPLIMLACSDTRVKK). The helical transmembrane segment at 197–217 (MAMFVVAGFNLSSSLFIILLS) threads the bilayer. Residues 218–237 (YLFIFAAIFRIRSAEGRHKA) lie on the Cytoplasmic side of the membrane. A helical membrane pass occupies residues 238–258 (FSTCASHLTIVTLFYGTLFCM). At 259 to 271 (YVRPPSEKSVEES) the chain is on the extracellular side. The helical transmembrane segment at 272 to 292 (KITAVFYTFLSPMLNPLIYSL) threads the bilayer. The Cytoplasmic portion of the chain corresponds to 293-315 (RNTDVILAMQQMIRGKSFHKIAV).

The protein belongs to the G-protein coupled receptor 1 family.

It is found in the cell membrane. Its function is as follows. Odorant receptor. This chain is Olfactory receptor 5M1 (OR5M1), found in Homo sapiens (Human).